Here is a 208-residue protein sequence, read N- to C-terminus: Outer-membrane lipoprotein carrier protein (208 aa).

Residues 1 to 22 form the signal peptide; the sequence is MKKRLCAVLLASPLLFSAAVFA.

Belongs to the LolA family. Monomer.

Its subcellular location is the periplasm. Functionally, participates in the translocation of lipoproteins from the inner membrane to the outer membrane. Only forms a complex with a lipoprotein if the residue after the N-terminal Cys is not an aspartate (The Asp acts as a targeting signal to indicate that the lipoprotein should stay in the inner membrane). The polypeptide is Outer-membrane lipoprotein carrier protein (Shewanella baltica (strain OS223)).